The chain runs to 77 residues: Rhodotorucin-A peptides type 2 (77 aa).

The propeptide occupies 1–3 (MVA). Cys14 is lipidated: S-farnesyl cysteine. A propeptide spanning residues 15–18 (TVAK) is cleaved from the precursor. Cys29 carries S-farnesyl cysteine lipidation. Positions 30-33 (TVSK) are excised as a propeptide. The S-farnesyl cysteine moiety is linked to residue Cys44. Residues 45–48 (TVSK) constitute a propeptide that is removed on maturation. Cys59 is lipidated: S-farnesyl cysteine. The propeptide occupies 60–63 (TVSK). Cys74 carries S-farnesyl cysteine lipidation. A propeptide spanning residues 75–77 (TVA) is cleaved from the precursor.

The protein resides in the cell membrane. Functionally, rhodotorucin-A is a mating pheromone in cells of mating type A of Rhodosporidium toruloides. In Rhodotorula toruloides (Yeast), this protein is Rhodotorucin-A peptides type 2 (RHA2).